Here is a 215-residue protein sequence, read N- to C-terminus: Disulfide-bond oxidoreductase YfcG (215 aa).

The GST N-terminal domain maps to 1 to 87 (MIDLYFAPTP…YLAEKTGLFL (87 aa)). Glutathione is bound by residues Asn-11, Gln-38, Arg-40, Ile-52, 71–72 (ES), and Arg-132. The GST C-terminal domain maps to 90-215 (ETRERAATLQ…AQLGDERSDS (126 aa)).

It belongs to the GST superfamily. Nu-class GSH transferase family. Homodimer.

Exhibits a very robust glutathione (GSH)-dependent disulfide-bond reductase activity toward the model substrate, 2-hydroxyethyl disulfide; the actual physiological substrates are not known. Also has a low GSH-dependent hydroperoxidase activity toward cumene hydroperoxide, but does not reduce H(2)O(2), tert-butyl hydroperoxide, benzyl peroxide, or lauroyl peroxide. Exhibits little or no GSH transferase activity with most typical electrophilic substrates, and has no detectable transferase activity using glutathionylspermidine (GspSH) as the nucleophilic substrate. Is involved in defense against oxidative stress, probably via its peroxidase activity. The protein is Disulfide-bond oxidoreductase YfcG (yfcG) of Escherichia coli (strain K12).